Consider the following 423-residue polypeptide: NDP-N-acetyl-D-galactosaminuronic acid dehydrogenase (423 aa).

11–28 serves as a coordination point for NAD(+); the sequence is TISVVGLGYIGLPTATVL. Lysine 218 functions as the Proton donor/acceptor in the catalytic mechanism. Cysteine 272 acts as the Nucleophile in catalysis.

This sequence belongs to the UDP-glucose/GDP-mannose dehydrogenase family.

In terms of biological role, probably involved in synthesis of sugar components of EPS I, by converting NDP-N-acetyl-D-galactosamine into NDP-N-acetyl-D-galactosaminuronic acid. This chain is NDP-N-acetyl-D-galactosaminuronic acid dehydrogenase (epsD), found in Ralstonia solanacearum (Pseudomonas solanacearum).